Consider the following 224-residue polypeptide: 2-C-methyl-D-erythritol 4-phosphate cytidylyltransferase (224 aa).

This sequence belongs to the IspD/TarI cytidylyltransferase family. IspD subfamily.

The enzyme catalyses 2-C-methyl-D-erythritol 4-phosphate + CTP + H(+) = 4-CDP-2-C-methyl-D-erythritol + diphosphate. Its pathway is isoprenoid biosynthesis; isopentenyl diphosphate biosynthesis via DXP pathway; isopentenyl diphosphate from 1-deoxy-D-xylulose 5-phosphate: step 2/6. Catalyzes the formation of 4-diphosphocytidyl-2-C-methyl-D-erythritol from CTP and 2-C-methyl-D-erythritol 4-phosphate (MEP). The polypeptide is 2-C-methyl-D-erythritol 4-phosphate cytidylyltransferase (Saccharopolyspora erythraea (strain ATCC 11635 / DSM 40517 / JCM 4748 / NBRC 13426 / NCIMB 8594 / NRRL 2338)).